The chain runs to 254 residues: Phosphate import ATP-binding protein PstB 2 (254 aa).

The ABC transporter domain occupies 9 to 249; sequence FNIDNLNLFY…PRDDRTRGYV (241 aa). ATP is bound at residue 41-48; it reads GPSGCGKS.

The protein belongs to the ABC transporter superfamily. Phosphate importer (TC 3.A.1.7) family. In terms of assembly, the complex is composed of two ATP-binding proteins (PstB), two transmembrane proteins (PstC and PstA) and a solute-binding protein (PstS).

It is found in the cell inner membrane. It carries out the reaction phosphate(out) + ATP + H2O = ADP + 2 phosphate(in) + H(+). In terms of biological role, part of the ABC transporter complex PstSACB involved in phosphate import. Responsible for energy coupling to the transport system. This is Phosphate import ATP-binding protein PstB 2 from Photobacterium profundum (strain SS9).